We begin with the raw amino-acid sequence, 420 residues long: 2',3'-cyclic-nucleotide 3'-phosphodiesterase (420 aa).

Position 9 is a phosphoserine (Ser-9). Phosphotyrosine is present on Tyr-110. Phosphoserine occurs at positions 169, 227, and 239. The Proton acceptor role is filled by His-250. Thr-252 provides a ligand contact to substrate. At Thr-262 the chain carries Phosphothreonine. The active-site Proton donor is the His-329. Residue Thr-331 participates in substrate binding. Ser-358 is modified (phosphoserine). The residue at position 417 (Cys-417) is a Cysteine methyl ester. The S-farnesyl cysteine moiety is linked to residue Cys-417. The propeptide at 418–420 (TII) is removed in mature form.

The protein belongs to the 2H phosphoesterase superfamily. CNPase family. Exists as monomers and homodimers.

Its subcellular location is the membrane. It is found in the melanosome. The enzyme catalyses a nucleoside 2',3'-cyclic phosphate + H2O = a nucleoside 2'-phosphate + H(+). Its function is as follows. Catalyzes the formation of 2'-nucleotide products from 2',3'-cyclic substrates. May participate in RNA metabolism in the myelinating cell, CNP is the third most abundant protein in central nervous system myelin. In Rattus norvegicus (Rat), this protein is 2',3'-cyclic-nucleotide 3'-phosphodiesterase.